A 228-amino-acid chain; its full sequence is Protein Thf1 (228 aa).

Positions 201–223 (IKRSKEVVDELSQTERRKREERA) form a coiled coil. Positions 209-228 (DELSQTERRKREERAVSQPG) are disordered.

It belongs to the THF1 family.

In terms of biological role, may be involved in photosynthetic membrane biogenesis. The protein is Protein Thf1 of Gloeobacter violaceus (strain ATCC 29082 / PCC 7421).